We begin with the raw amino-acid sequence, 292 residues long: Lipoyl synthase (292 aa).

The [4Fe-4S] cluster site is built by cysteine 34, cysteine 39, cysteine 45, cysteine 60, cysteine 64, cysteine 67, and serine 273. A Radical SAM core domain is found at 46–262 (WNKKHATVMI…KYVAYSKGFL (217 aa)).

This sequence belongs to the radical SAM superfamily. Lipoyl synthase family. The cofactor is [4Fe-4S] cluster.

It is found in the cytoplasm. It carries out the reaction [[Fe-S] cluster scaffold protein carrying a second [4Fe-4S](2+) cluster] + N(6)-octanoyl-L-lysyl-[protein] + 2 oxidized [2Fe-2S]-[ferredoxin] + 2 S-adenosyl-L-methionine + 4 H(+) = [[Fe-S] cluster scaffold protein] + N(6)-[(R)-dihydrolipoyl]-L-lysyl-[protein] + 4 Fe(3+) + 2 hydrogen sulfide + 2 5'-deoxyadenosine + 2 L-methionine + 2 reduced [2Fe-2S]-[ferredoxin]. It functions in the pathway protein modification; protein lipoylation via endogenous pathway; protein N(6)-(lipoyl)lysine from octanoyl-[acyl-carrier-protein]: step 2/2. Catalyzes the radical-mediated insertion of two sulfur atoms into the C-6 and C-8 positions of the octanoyl moiety bound to the lipoyl domains of lipoate-dependent enzymes, thereby converting the octanoylated domains into lipoylated derivatives. This chain is Lipoyl synthase, found in Ehrlichia ruminantium (strain Welgevonden).